A 1687-amino-acid polypeptide reads, in one-letter code: A-kinase anchor protein SPHKAP (1687 aa).

A compositionally biased stretch (polar residues) spans 1 to 14 (MDVNSRLSVQSNVE). 2 disordered regions span residues 1–25 (MDVNSRLSVQSNVESPLMHEGPEPQ) and 272–293 (RKHRTPSTKTEGSKENTEENTS). Residues 914–931 (FAEELAETVVSMATEIAA) are PKA-RII subunit binding domain. A disordered region spans residues 964–989 (LKRKKENSSAGSTVRKHKPPRLSEIK). A phosphoserine mark is found at Ser-1010, Ser-1070, Ser-1092, Ser-1105, Ser-1106, Ser-1109, Ser-1244, and Ser-1273. 2 disordered regions span residues 1363 to 1406 (VTEG…SPRR) and 1421 to 1520 (DQKE…PDDT). Positions 1366–1375 (GNHSPVSSPG) are enriched in polar residues. Residues 1382-1393 (KPSDFDPRRETS) show a composition bias toward basic and acidic residues. Polar residues predominate over residues 1461 to 1470 (TAPSTCQSSR). Residues 1482–1494 (EVLKEDIPRDESR) show a composition bias toward basic and acidic residues. A compositionally biased stretch (low complexity) spans 1495 to 1508 (NPPSSSEESTGSWS).

It belongs to the AKAP110 family. Interacts (via the PKA-RII subunit binding domain) with the RI subunit of PKA. Interacts with SPHK1; the interaction greatly reduces SPHK1 activity.

It localises to the cytoplasm. Functionally, anchoring protein that binds preferentially to the type I regulatory subunit of c-AMP-dependent protein kinase (PKA type I) and targets it to distinct subcellular compartments. May act as a converging factor linking cAMP and sphingosine signaling pathways. Plays a regulatory role in the modulation of SPHK1. This chain is A-kinase anchor protein SPHKAP (Sphkap), found in Mus musculus (Mouse).